We begin with the raw amino-acid sequence, 319 residues long: Peroxidase 13 (319 aa).

The N-terminal stretch at 1-22 (MITIALFLVLLYFHDQLGYSAA) is a signal peptide. 4 disulfide bridges follow: C33–C111, C66–C71, C117–C315, and C196–C222. Residue H64 is the Proton acceptor of the active site. Ca(2+) is bound by residues D65, V68, G70, D72, and S74. P158 is a binding site for substrate. Residue H189 coordinates heme b. Position 190 (T190) interacts with Ca(2+). Positions 235, 238, and 243 each coordinate Ca(2+). The N-linked (GlcNAc...) asparagine glycan is linked to N280.

The protein belongs to the peroxidase family. Classical plant (class III) peroxidase subfamily. Heme b is required as a cofactor. Ca(2+) serves as cofactor.

It is found in the secreted. It catalyses the reaction 2 a phenolic donor + H2O2 = 2 a phenolic radical donor + 2 H2O. Removal of H(2)O(2), oxidation of toxic reductants, biosynthesis and degradation of lignin, suberization, auxin catabolism, response to environmental stresses such as wounding, pathogen attack and oxidative stress. These functions might be dependent on each isozyme/isoform in each plant tissue. This is Peroxidase 13 (PER13) from Arabidopsis thaliana (Mouse-ear cress).